A 248-amino-acid polypeptide reads, in one-letter code: Flavodoxin/ferredoxin--NADP reductase (248 aa).

Positions 2-101 constitute an FAD-binding FR-type domain; it reads ADWVTGKVTK…SEAAGFFVLD (100 aa). FAD-binding positions include 50–53, Tyr-66, 74–76, and Thr-116; these read RAYS and KLS. NADP(+) contacts are provided by residues 143-144, 173-174, Arg-184, 214-216, and Asp-220; these read AR, SR, and NPQ. 247–248 is an FAD binding site; the sequence is YW.

Belongs to the ferredoxin--NADP reductase type 1 family. Requires FAD as cofactor.

It localises to the cytoplasm. It carries out the reaction 2 reduced [2Fe-2S]-[ferredoxin] + NADP(+) + H(+) = 2 oxidized [2Fe-2S]-[ferredoxin] + NADPH. The catalysed reaction is reduced [flavodoxin] + NADP(+) = oxidized [flavodoxin] + NADPH + 2 H(+). Functionally, transports electrons between flavodoxin or ferredoxin and NADPH. In Shigella flexneri, this protein is Flavodoxin/ferredoxin--NADP reductase (fpr).